Reading from the N-terminus, the 203-residue chain is CASP-like protein 2U6 (203 aa).

The Cytoplasmic portion of the chain corresponds to 1–31 (MSEHRIPVAADKKISPPISAGEQKGCKGLKR). A helical transmembrane segment spans residues 32 to 52 (TDLMLRFAAFVCCTVTMVVLI). Residues 53–84 (TDKQTSAIQVPGFNNLTITKTVSFDLAKAFVY) are Extracellular-facing. Asn67 carries N-linked (GlcNAc...) asparagine glycosylation. The helical transmembrane segment at 85 to 105 (LVSAAGIGAGYTLLVLVLSII) threads the bilayer. The Cytoplasmic segment spans residues 106–111 (SAERSK). The chain crosses the membrane as a helical span at residues 112-132 (AIAWFIFVFDQLITYVLLAAA). Residues 133-164 (AASTEVAYMGAHAPPEASWLKVCSLFGRFCHQ) lie on the Extracellular side of the membrane. A helical membrane pass occupies residues 165-185 (LGASLVTSLISTVLFAFSAAI). At 186 to 203 (SAYYLFSNTNVRPAYSKG) the chain is on the cytoplasmic side.

This sequence belongs to the Casparian strip membrane proteins (CASP) family. As to quaternary structure, homodimer and heterodimers.

The protein localises to the cell membrane. The sequence is that of CASP-like protein 2U6 from Selaginella moellendorffii (Spikemoss).